Reading from the N-terminus, the 376-residue chain is Response regulator aspartate phosphatase H (376 aa).

6 TPR repeats span residues Tyr-99–Val-132, Ala-139–His-172, Ile-180–Ile-213, Ala-220–Lys-253, Pro-259–Arg-292, and Glu-334–Ile-367.

It belongs to the Rap family. Homodimer. Interacts with phosphorylated Spo0F. Each RapH protomer is bound to a monomer of Spo0F, forming a heterotetrameric complex. May also interact with non-phosphorylated Spo0F to inhibit the sporulation phosphorelay. Interacts with the C-terminal DNA-binding region of ComA. Does not interact with DegU.

The protein resides in the cytoplasm. Its activity is regulated as follows. Both activities are inhibited by RapH. Its function is as follows. Dual specificity regulatory protein that can control both sporulation and competence by acting on two distinct response regulators: Spo0F and ComA, respectively. Is involved in the temporal separation of competence and sporulation. Acts as a phosphatase that specifically dephosphorylates the sporulation initiation phosphotransferase Spo0F and inhibits its activity. RapH can also antagonize sporulation by sterically blocking phosphoryl transfer to and from Spo0F. In addition, inhibits the activity of ComA, a transcriptional factor that regulates the development of genetic competence. Acts by binding to ComA, leading to the inhibition of its DNA-binding activity. This Bacillus subtilis (strain 168) protein is Response regulator aspartate phosphatase H (rapH).